Consider the following 281-residue polypeptide: Hydroxyethylthiazole kinase (281 aa).

ATP-binding residues include R124 and S169.

Belongs to the Thz kinase family. Requires Mg(2+) as cofactor.

It carries out the reaction 5-(2-hydroxyethyl)-4-methylthiazole + ATP = 4-methyl-5-(2-phosphooxyethyl)-thiazole + ADP + H(+). The protein operates within cofactor biosynthesis; thiamine diphosphate biosynthesis; 4-methyl-5-(2-phosphoethyl)-thiazole from 5-(2-hydroxyethyl)-4-methylthiazole: step 1/1. In terms of biological role, catalyzes the phosphorylation of the hydroxyl group of 4-methyl-5-beta-hydroxyethylthiazole (THZ). In Rhodococcus erythropolis (strain PR4 / NBRC 100887), this protein is Hydroxyethylthiazole kinase.